Reading from the N-terminus, the 3856-residue chain is Hybrid PKS-NRPS synthetase traA (3856 aa).

In terms of domain architecture, Ketosynthase family 3 (KS3) spans 6–438 (PEPIAIVGSG…GTNGHAILEE (433 aa)). Catalysis depends on for beta-ketoacyl synthase activity residues Cys-179, His-318, and His-358. The tract at residues 554-885 (IFTGQGAQWA…FSDALGFVWT (332 aa)) is malonyl-CoA:ACP transacylase (MAT) domain. Residues 943–1081 (HELLGVPSPN…GKVTVIYGTP (139 aa)) form an N-terminal hotdog fold region. Residues 943-1247 (HELLGVPSPN…LSMKPFSPAT (305 aa)) are dehydratase (DH) domain. In terms of domain architecture, PKS/mFAS DH spans 943–1249 (HELLGVPSPN…MKPFSPATAD (307 aa)). His-975 functions as the Proton acceptor; for dehydratase activity in the catalytic mechanism. Positions 1096 to 1249 (MVDIQAEQFY…MKPFSPATAD (154 aa)) are C-terminal hotdog fold. The active-site Proton donor; for dehydratase activity is the Asp-1156. A methyltransferase (MT) domain region spans residues 1290–1456 (LACVAQQIVH…RKAGFSGIDS (167 aa)). The interval 1984–2158 (TYVLVGLSGR…ATSLDIGSIV (175 aa)) is ketoreductase (KR) domain. Residues 2266-2347 (ADALEILKEL…TLCQQALEKL (82 aa)) enclose the Carrier 1 domain. Ser-2307 carries the O-(pantetheine 4'-phosphoryl)serine modification. The segment at 2351–2422 (ILPNVESGGP…SSTPATVLSN (72 aa)) is disordered. Low complexity-rich tracts occupy residues 2357-2369 (SGGP…SKPT) and 2399-2418 (TTSP…TPAT). The interval 2446–2884 (VKTELVSFQQ…FALFSDKELK (439 aa)) is condensation (C) domain. Residues 2910 to 3310 (QIAKENDDKV…GAMVFHNRIA (401 aa)) form an adenylation (A) domain region. The segment at 3403–3429 (SKTDRKALKELPLPQRSNHDTGDNTES) is disordered. Positions 3428-3507 (ESLTETMLEL…DMTQKIEESL (80 aa)) constitute a Carrier 2 domain. Ser-3467 is modified (O-(pantetheine 4'-phosphoryl)serine). Positions 3544 to 3768 (VTGSGGFLGK…EMTPIHSAAS (225 aa)) are reductase (R) domain.

In the C-terminal section; belongs to the NRP synthetase family.

It participates in secondary metabolite biosynthesis. In terms of biological role, hybrid PKS-NRPS synthetase; part of the tra gene cluster that produces terrestric acid. The clavatol biosynthesis cluster cla and the terrestric acid cluster tra are both involved in the production of peniphenones and penilactones. The non-reducing PKS claF is responsible for the formation of clavatol from successive condensations of 3 malonyl-CoA units, presumably with a simple acetyl-CoA starter unit, and 2 methylation steps. The esterase claE probably collaborates with claF by catalyzing the hydrolysis of ACP-bound acyl intermediates to free the ACP from stalled intermediates. The clavatol oxidase claD then converts clavatol to hydroxyclavatol. Spontaneous dehydration of hydroxyclavatol leads to the accumulation of the highly active ortho-quinone methide. On the other hand, the PKS-NRPS hybrid traA is involved in the formation of crustosic acid, with the help of traB and traD. The polyketide synthase module (PKS) of traA is responsible for the synthesis of the polyketide backbone via the condensation of an acetyl-CoA starter unit with 3 malonyl-CoA units. The downstream nonribosomal peptide synthetase (NRPS) module then amidates the carboxyl end of the polyketide with L-malic acid. Because traA lacks a designated enoylreductase (ER) domain, the required activity is provided the enoyl reductase traG. Crustosic acid undergoes decarboxylation and isomerization to the terrestric acid, catalyzed by the 2-oxoglutarate-dependent dioxygenase traH. Both acids are further converted to the 2 gamma-butyrolactones (R)-5-methyltetronic acid and (S)-5-carboxylmethyltetronic acid, with involvement of the cytochrome P450 monooxygenase claJ. Spontaneous addition of the methide to these gamma-butyrolactones leads to peniphenone D and penilactone D, which undergo again stereospecific attacking by methide to give penilactones A and B. In Penicillium crustosum (Blue mold fungus), this protein is Hybrid PKS-NRPS synthetase traA.